A 197-amino-acid chain; its full sequence is Thymidine kinase (197 aa).

Residues 9–16 and 87–90 each bind ATP; these read SAMDAGKT and DEIH. Glu88 (proton acceptor) is an active-site residue. Zn(2+) is bound by residues Cys145, Cys147, Cys187, and His190.

The protein belongs to the thymidine kinase family. As to quaternary structure, homotetramer.

The protein localises to the cytoplasm. The enzyme catalyses thymidine + ATP = dTMP + ADP + H(+). This chain is Thymidine kinase, found in Francisella tularensis subsp. tularensis (strain SCHU S4 / Schu 4).